Here is a 100-residue protein sequence, read N- to C-terminus: Urease subunit gamma (100 aa).

It belongs to the urease gamma subunit family. Heterotrimer of UreA (gamma), UreB (beta) and UreC (alpha) subunits. Three heterotrimers associate to form the active enzyme.

Its subcellular location is the cytoplasm. It carries out the reaction urea + 2 H2O + H(+) = hydrogencarbonate + 2 NH4(+). The protein operates within nitrogen metabolism; urea degradation; CO(2) and NH(3) from urea (urease route): step 1/1. In Chromohalobacter salexigens (strain ATCC BAA-138 / DSM 3043 / CIP 106854 / NCIMB 13768 / 1H11), this protein is Urease subunit gamma.